Here is a 123-residue protein sequence, read N- to C-terminus: uncharacterized protein (123 aa).

This is an uncharacterized protein from Escherichia coli O157:H7.